We begin with the raw amino-acid sequence, 547 residues long: Chaperonin GroEL (547 aa).

Residues 30 to 33 (TLGP), lysine 51, 87 to 91 (DGTTT), glycine 415, and aspartate 496 each bind ATP.

The protein belongs to the chaperonin (HSP60) family. In terms of assembly, forms a cylinder of 14 subunits composed of two heptameric rings stacked back-to-back. Interacts with the co-chaperonin GroES.

Its subcellular location is the cytoplasm. It catalyses the reaction ATP + H2O + a folded polypeptide = ADP + phosphate + an unfolded polypeptide.. Functionally, together with its co-chaperonin GroES, plays an essential role in assisting protein folding. The GroEL-GroES system forms a nano-cage that allows encapsulation of the non-native substrate proteins and provides a physical environment optimized to promote and accelerate protein folding. The chain is Chaperonin GroEL from Actinobacillus pleuropneumoniae serotype 5b (strain L20).